Consider the following 90-residue polypeptide: Co-chaperonin GroES (90 aa).

Belongs to the GroES chaperonin family. Heptamer of 7 subunits arranged in a ring. Interacts with the chaperonin GroEL.

It localises to the cytoplasm. Its function is as follows. Together with the chaperonin GroEL, plays an essential role in assisting protein folding. The GroEL-GroES system forms a nano-cage that allows encapsulation of the non-native substrate proteins and provides a physical environment optimized to promote and accelerate protein folding. GroES binds to the apical surface of the GroEL ring, thereby capping the opening of the GroEL channel. The polypeptide is Co-chaperonin GroES (Borreliella afzelii (strain PKo) (Borrelia afzelii)).